A 157-amino-acid polypeptide reads, in one-letter code: Small ribosomal subunit protein uS7 (157 aa).

This sequence belongs to the universal ribosomal protein uS7 family. As to quaternary structure, part of the 30S ribosomal subunit. Contacts proteins S9 and S11.

In terms of biological role, one of the primary rRNA binding proteins, it binds directly to 16S rRNA where it nucleates assembly of the head domain of the 30S subunit. Is located at the subunit interface close to the decoding center, probably blocks exit of the E-site tRNA. The polypeptide is Small ribosomal subunit protein uS7 (Caulobacter sp. (strain K31)).